Here is a 186-residue protein sequence, read N- to C-terminus: Photosystem I assembly protein Ycf4 (186 aa).

Transmembrane regions (helical) follow at residues 22 to 42 and 57 to 77; these read FCWAFILFLGSLGFLLVGTSS and IIFFPQGIVMSFYGIAGLFIS.

It belongs to the Ycf4 family.

The protein resides in the plastid. It localises to the chloroplast thylakoid membrane. Seems to be required for the assembly of the photosystem I complex. In Vitis vinifera (Grape), this protein is Photosystem I assembly protein Ycf4.